A 390-amino-acid chain; its full sequence is GTPase Obg (390 aa).

The Obg domain maps to 1–159 (MKFVDEASIL…RDLLLELMLL (159 aa)). Positions 127 to 147 (NTRFKSSVNRTPRQKTNGTPG) are disordered. The span at 129–145 (RFKSSVNRTPRQKTNGT) shows a compositional bias: polar residues. Positions 160–333 (ADVGMLGMPN…LCWDVMTFII (174 aa)) constitute an OBG-type G domain. GTP contacts are provided by residues 166–173 (GMPNAGKS), 191–195 (FTTLV), 213–216 (DIPG), 283–286 (NKID), and 314–316 (SAA). S173 and T193 together coordinate Mg(2+).

This sequence belongs to the TRAFAC class OBG-HflX-like GTPase superfamily. OBG GTPase family. As to quaternary structure, monomer. Mg(2+) is required as a cofactor.

The protein localises to the cytoplasm. In terms of biological role, an essential GTPase which binds GTP, GDP and possibly (p)ppGpp with moderate affinity, with high nucleotide exchange rates and a fairly low GTP hydrolysis rate. Plays a role in control of the cell cycle, stress response, ribosome biogenesis and in those bacteria that undergo differentiation, in morphogenesis control. This is GTPase Obg from Salmonella paratyphi A (strain ATCC 9150 / SARB42).